A 269-amino-acid polypeptide reads, in one-letter code: Putative pyruvate, phosphate dikinase regulatory protein (269 aa).

147–154 (GVSRTSKT) contributes to the ADP binding site.

This sequence belongs to the pyruvate, phosphate/water dikinase regulatory protein family. PDRP subfamily.

The enzyme catalyses N(tele)-phospho-L-histidyl/L-threonyl-[pyruvate, phosphate dikinase] + ADP = N(tele)-phospho-L-histidyl/O-phospho-L-threonyl-[pyruvate, phosphate dikinase] + AMP + H(+). It carries out the reaction N(tele)-phospho-L-histidyl/O-phospho-L-threonyl-[pyruvate, phosphate dikinase] + phosphate + H(+) = N(tele)-phospho-L-histidyl/L-threonyl-[pyruvate, phosphate dikinase] + diphosphate. Its function is as follows. Bifunctional serine/threonine kinase and phosphorylase involved in the regulation of the pyruvate, phosphate dikinase (PPDK) by catalyzing its phosphorylation/dephosphorylation. The polypeptide is Putative pyruvate, phosphate dikinase regulatory protein (Geotalea daltonii (strain DSM 22248 / JCM 15807 / FRC-32) (Geobacter daltonii)).